The following is an 852-amino-acid chain: Lon protease homolog 2, peroxisomal (852 aa).

Ser2 bears the N-acetylserine mark. Positions 13–222 (LPLLLTHESV…MTIPLLVRQI (210 aa)) constitute a Lon N-terminal domain. Residue 375-382 (GPPGVGKT) participates in ATP binding. Positions 651 to 837 (LSQPGVAIGL…DEVLNAAFDG (187 aa)) constitute a Lon proteolytic domain. Active-site residues include Ser743 and Lys786. The Microbody targeting signal signature appears at 850–852 (SKL).

It belongs to the peptidase S16 family. As to quaternary structure, interacts with PEX5. Interacts with TYSND1. May interact with enzymes involved in beta-oxidation of fatty acids, including ACOX1/AOX.

It localises to the peroxisome matrix. It carries out the reaction Hydrolysis of proteins in presence of ATP.. Its function is as follows. ATP-dependent serine protease that mediates the selective degradation of misfolded and unassembled polypeptides in the peroxisomal matrix. Necessary for type 2 peroxisome targeting signal (PTS2)-containing protein processing and facilitates peroxisome matrix protein import. May indirectly regulate peroxisomal fatty acid beta-oxidation through degradation of the self-processed forms of TYSND1. The sequence is that of Lon protease homolog 2, peroxisomal (Lonp2) from Rattus norvegicus (Rat).